Consider the following 284-residue polypeptide: Avenin-like b3 (284 aa).

A signal peptide spans 1–18 (MKVFILALLALTATTAIA).

It belongs to the prolamin family. In terms of processing, contains disulfide bonds.

Functionally, seed storage protein. Might be integrated via inter-chain disulfide bonds within the glutenin polymer. This is Avenin-like b3 from Triticum aestivum (Wheat).